We begin with the raw amino-acid sequence, 289 residues long: Beta-lactamase Toho-2 (289 aa).

Residues 1 to 28 form the signal peptide; that stretch reads MVTKRVQRMMSAAAACIPLLLGSPTLYA. Ser73 functions as the Acyl-ester intermediate in the catalytic mechanism. Substrate is bound at residue 235–237; the sequence is KTG.

Belongs to the class-A beta-lactamase family.

It carries out the reaction a beta-lactam + H2O = a substituted beta-amino acid. Inhibited 16-fold better by the beta-lactamase inhibitor tazobactam than by clavulanic acid. Functionally, hydrolyzes beta-lactam antibiotics such as penicillin G, carbenicillin, cephaloridine, cefoxitin, cefotaxime, ceftazidime, and aztreonam. Has especially increased relative hydrolysis rates for cephalothin, cephaloridine, cefotaxime and ceftizoxime. The sequence is that of Beta-lactamase Toho-2 (bla) from Escherichia coli.